The following is a 353-amino-acid chain: tRNA N6-adenosine threonylcarbamoyltransferase (353 aa).

Positions 109 and 113 each coordinate Fe cation. Residues 136 to 140 (TVSGG), D169, G182, D186, and N284 each bind substrate. D312 lines the Fe cation pocket.

It belongs to the KAE1 / TsaD family. Requires Fe(2+) as cofactor.

The protein resides in the cytoplasm. It catalyses the reaction L-threonylcarbamoyladenylate + adenosine(37) in tRNA = N(6)-L-threonylcarbamoyladenosine(37) in tRNA + AMP + H(+). Required for the formation of a threonylcarbamoyl group on adenosine at position 37 (t(6)A37) in tRNAs that read codons beginning with adenine. Is involved in the transfer of the threonylcarbamoyl moiety of threonylcarbamoyl-AMP (TC-AMP) to the N6 group of A37, together with TsaE and TsaB. TsaD likely plays a direct catalytic role in this reaction. This chain is tRNA N6-adenosine threonylcarbamoyltransferase, found in Chlorobium limicola (strain DSM 245 / NBRC 103803 / 6330).